Reading from the N-terminus, the 104-residue chain is uncharacterized protein (104 aa).

It is found in the mitochondrion. This is an uncharacterized protein from Claviceps purpurea (Ergot fungus).